We begin with the raw amino-acid sequence, 450 residues long: Chitobiosyldiphosphodolichol beta-mannosyltransferase (450 aa).

The Lumenal segment spans residues 1–13 (MSWIQIPWSWVVT). A helical transmembrane segment spans residues 14-34 (LIVTYLSLPLIIYYLVPYIFY). Residues 35–106 (GNKSSKKRII…PTLTLQGNKR (72 aa)) lie on the Cytoplasmic side of the membrane. Residues 107–127 (SIIFLVKKVLFQVSAIIAQLW) constitute an intramembrane region (helical). Residues 128 to 450 (ELRGSNYMLI…SAMQELKLVA (323 aa)) are Cytoplasmic-facing.

It belongs to the glycosyltransferase group 1 family.

The protein resides in the endoplasmic reticulum membrane. It catalyses the reaction an N,N'-diacetylchitobiosyl-diphospho-di-trans,poly-cis-dolichol + GDP-alpha-D-mannose = a beta-D-Man-(1-&gt;4)-beta-D-GlcNAc-(1-&gt;4)-alpha-D-GlcNAc-diphospho-di-trans,poly-cis-dolichol + GDP + H(+). Its pathway is protein modification; protein glycosylation. Its function is as follows. Participates in the formation of the lipid-linked precursor oligosaccharide for N-glycosylation. Involved in assembling the dolichol-pyrophosphate-GlcNAc(2)-Man(5) intermediate on the cytoplasmic surface of the ER. The protein is Chitobiosyldiphosphodolichol beta-mannosyltransferase (ALG1) of Candida glabrata (strain ATCC 2001 / BCRC 20586 / JCM 3761 / NBRC 0622 / NRRL Y-65 / CBS 138) (Yeast).